The sequence spans 200 residues: Ankyrin repeat-containing protein YAR1 (200 aa).

ANK repeat units follow at residues 49-78 (SDST…RANS) and 92-121 (TGNT…ADPF). Serine 78 carries the post-translational modification Phosphoserine. Positions 152–173 (VEPEDDEEDTQTEGKNSVQITK) are disordered. Residues 153 to 162 (EPEDDEEDTQ) are compositionally biased toward acidic residues. Residues 164 to 173 (EGKNSVQITK) are compositionally biased toward polar residues.

Its function is as follows. Required for normal rate of cell proliferation. The chain is Ankyrin repeat-containing protein YAR1 (YAR1) from Saccharomyces cerevisiae (strain ATCC 204508 / S288c) (Baker's yeast).